The sequence spans 91 residues: CRISPR-associated endoribonuclease Cas2 (91 aa).

Asp-14 contributes to the Mg(2+) binding site.

Belongs to the CRISPR-associated endoribonuclease Cas2 protein family. In terms of assembly, homodimer, forms a heterotetramer with a Cas1 homodimer. Mg(2+) is required as a cofactor.

CRISPR (clustered regularly interspaced short palindromic repeat), is an adaptive immune system that provides protection against mobile genetic elements (viruses, transposable elements and conjugative plasmids). CRISPR clusters contain sequences complementary to antecedent mobile elements and target invading nucleic acids. CRISPR clusters are transcribed and processed into CRISPR RNA (crRNA). Functions as a ssRNA-specific endoribonuclease. Involved in the integration of spacer DNA into the CRISPR cassette. The sequence is that of CRISPR-associated endoribonuclease Cas2 from Nanoarchaeum equitans (strain Kin4-M).